Reading from the N-terminus, the 601-residue chain is MSDTDPTTATDDTLRTPIVAVLGHVDHGKTSLLDKIRGSAVTAGESGAITQHIGATAVPLDVISEIAGDLVDPTDFDLPGLLFIDTPGHHSFSTLRSRGGALADIAILVVDVNDGFQPQTLEAIDILKRTQTPFIVAANKIDTVPGWNPNEGQPVQQTMDAQSDRVQSDLNEKLYEIIGELSDNGFSADMYWRVQNFQANIGVVPVSAETSEGIPDLLTVMMGLSQRYMKEEMEIDTSGPGVGTVLEVKDTQGFGTTLDAIIYDGTIRNDDTIVVGGLQGPIITDVRALLRPRPLEEIRTEQEFEQVDEVAAADGVKIAAPELGDAMAGAPIRVIRDRDRSEVIAEVEEELAEIEVTTQEEGVVIKADTLGSLEALSSTLEEEEIPVMRAEVGAVAPRDVRVAETAGESTNQAILAFSVDVLDDARDLAEQEDVKLFEDDVIYQLVESYDDHVTAIEEAQQEQILENITRPAKFRILQDHTFRQSDPAVVGVEILSGELRRNVNVVRWENGEANRVGTLKTIQDEGEDVDSARAGERMAVSIQGPTVGRQVEEGDDLWVEIPEKHAKILEQELKEDISVDEREALSMYLEKHRNRDPFWGK.

Residues Leu14–Met229 form the tr-type G domain. Residues Gly23 to Thr30 form a G1 region. Residue Gly23 to Thr30 participates in GTP binding. The tract at residues Ala48–His52 is G2. The G3 stretch occupies residues Asp85–Gly88. GTP contacts are provided by residues Asp85–His89 and Asn139–Asp142. The segment at Asn139 to Asp142 is G4. A G5 region spans residues Ser207–Glu209.

This sequence belongs to the TRAFAC class translation factor GTPase superfamily. Classic translation factor GTPase family. IF-2 subfamily.

In terms of biological role, function in general translation initiation by promoting the binding of the formylmethionine-tRNA to ribosomes. Seems to function along with eIF-2. The chain is Probable translation initiation factor IF-2 from Haloarcula marismortui (strain ATCC 43049 / DSM 3752 / JCM 8966 / VKM B-1809) (Halobacterium marismortui).